The sequence spans 317 residues: UDP-3-O-acylglucosamine N-acyltransferase (317 aa).

His229 functions as the Proton acceptor in the catalytic mechanism.

Belongs to the transferase hexapeptide repeat family. LpxD subfamily. As to quaternary structure, homotrimer.

It carries out the reaction a UDP-3-O-[(3R)-3-hydroxyacyl]-alpha-D-glucosamine + a (3R)-hydroxyacyl-[ACP] = a UDP-2-N,3-O-bis[(3R)-3-hydroxyacyl]-alpha-D-glucosamine + holo-[ACP] + H(+). It participates in bacterial outer membrane biogenesis; LPS lipid A biosynthesis. Functionally, catalyzes the N-acylation of UDP-3-O-acylglucosamine using 3-hydroxyacyl-ACP as the acyl donor. Is involved in the biosynthesis of lipid A, a phosphorylated glycolipid that anchors the lipopolysaccharide to the outer membrane of the cell. This Campylobacter concisus (strain 13826) protein is UDP-3-O-acylglucosamine N-acyltransferase.